Reading from the N-terminus, the 142-residue chain is Large ribosomal subunit protein mL42 (142 aa).

The N-terminal 32 residues, Met-1–His-32, are a transit peptide targeting the mitochondrion.

This sequence belongs to the mitochondrion-specific ribosomal protein mL42 family. Component of the mitochondrial large ribosomal subunit (mt-LSU). Mature mammalian 55S mitochondrial ribosomes consist of a small (28S) and a large (39S) subunit. The 28S small subunit contains a 12S ribosomal RNA (12S mt-rRNA) and 30 different proteins. The 39S large subunit contains a 16S rRNA (16S mt-rRNA), a copy of mitochondrial valine transfer RNA (mt-tRNA(Val)), which plays an integral structural role, and 52 different proteins.

The protein resides in the mitochondrion. In Homo sapiens (Human), this protein is Large ribosomal subunit protein mL42 (MRPL42).